Here is a 259-residue protein sequence, read N- to C-terminus: Small ribosomal subunit protein mS23 (259 aa).

Belongs to the mitochondrion-specific ribosomal protein mS23 family. In terms of assembly, component of the mitochondrial small ribosomal subunit.

Its subcellular location is the mitochondrion. The sequence is that of Small ribosomal subunit protein mS23 (RSM25) from Pyricularia oryzae (strain 70-15 / ATCC MYA-4617 / FGSC 8958) (Rice blast fungus).